A 332-amino-acid polypeptide reads, in one-letter code: Glycerol-3-phosphate dehydrogenase [NAD(P)+] (332 aa).

Ser11, Phe12, Lys32, and Lys106 together coordinate NADPH. Residues Lys106, Gly137, and Ser139 each contribute to the sn-glycerol 3-phosphate site. NADPH is bound at residue Ala141. Lys192, Asp245, Ser255, Arg256, and Asn257 together coordinate sn-glycerol 3-phosphate. Lys192 serves as the catalytic Proton acceptor. Arg256 contributes to the NADPH binding site. 2 residues coordinate NADPH: Val280 and Glu282.

It belongs to the NAD-dependent glycerol-3-phosphate dehydrogenase family.

The protein localises to the cytoplasm. The enzyme catalyses sn-glycerol 3-phosphate + NAD(+) = dihydroxyacetone phosphate + NADH + H(+). It catalyses the reaction sn-glycerol 3-phosphate + NADP(+) = dihydroxyacetone phosphate + NADPH + H(+). The protein operates within membrane lipid metabolism; glycerophospholipid metabolism. Its function is as follows. Catalyzes the reduction of the glycolytic intermediate dihydroxyacetone phosphate (DHAP) to sn-glycerol 3-phosphate (G3P), the key precursor for phospholipid synthesis. The chain is Glycerol-3-phosphate dehydrogenase [NAD(P)+] from Staphylococcus haemolyticus (strain JCSC1435).